The sequence spans 92 residues: Small ribosomal subunit protein uS19c (92 aa).

Belongs to the universal ribosomal protein uS19 family.

It localises to the plastid. It is found in the chloroplast. In terms of biological role, protein S19 forms a complex with S13 that binds strongly to the 16S ribosomal RNA. In Nymphaea alba (White water-lily), this protein is Small ribosomal subunit protein uS19c.